We begin with the raw amino-acid sequence, 314 residues long: Ribosomal protein uL3 glutamine methyltransferase (314 aa).

The protein belongs to the protein N5-glutamine methyltransferase family. PrmB subfamily.

The enzyme catalyses L-glutaminyl-[ribosomal protein uL3] + S-adenosyl-L-methionine = N(5)-methyl-L-glutaminyl-[ribosomal protein uL3] + S-adenosyl-L-homocysteine + H(+). Methylates large ribosomal subunit protein uL3 on a specific glutamine residue. This is Ribosomal protein uL3 glutamine methyltransferase from Haemophilus influenzae (strain ATCC 51907 / DSM 11121 / KW20 / Rd).